Here is a 249-residue protein sequence, read N- to C-terminus: Probable transcriptional regulatory protein A1S_1496 (249 aa).

The protein belongs to the TACO1 family.

The protein resides in the cytoplasm. This Acinetobacter baumannii (strain ATCC 17978 / DSM 105126 / CIP 53.77 / LMG 1025 / NCDC KC755 / 5377) protein is Probable transcriptional regulatory protein A1S_1496.